Consider the following 397-residue polypeptide: Mannonate dehydratase 2 (397 aa).

It belongs to the mannonate dehydratase family. Requires Fe(2+) as cofactor. The cofactor is Mn(2+).

It carries out the reaction D-mannonate = 2-dehydro-3-deoxy-D-gluconate + H2O. It participates in carbohydrate metabolism; pentose and glucuronate interconversion. Catalyzes the dehydration of D-mannonate. This is Mannonate dehydratase 2 (uxuA2) from Agrobacterium fabrum (strain C58 / ATCC 33970) (Agrobacterium tumefaciens (strain C58)).